A 505-amino-acid polypeptide reads, in one-letter code: Alkylglycerol monooxygenase (505 aa).

The next 2 helical transmembrane spans lie at 56–76 and 104–124; these read VSAW…ISGH and AVAI…ELPW. A Fatty acid hydroxylase domain is found at 130–262; sequence WIFCLFFQDF…FIIWDKMFNT (133 aa). The Histidine box-1 motif lies at 145–149; it reads HRAVH. A Histidine box-2 motif is present at residues 158–162; it reads HTIHH. The Histidine box-3 motif lies at 234-238; the sequence is HRVHH. A run of 4 helical transmembrane segments spans residues 366–386, 396–416, 430–450, and 452–472; these read ILVK…FFHF, LDCT…GAFF, CCGV…AGTH, and LFVI…VLVE.

Belongs to the sterol desaturase family. TMEM195 subfamily. Requires Fe cation as cofactor.

Its subcellular location is the endoplasmic reticulum membrane. It catalyses the reaction 1-O-(1,2-saturated-alkyl)-sn-glycerol + (6R)-L-erythro-5,6,7,8-tetrahydrobiopterin + O2 = a 1-(1-hydroxyalkyl)-sn-glycerol + (6R)-L-erythro-6,7-dihydrobiopterin + H2O. Its function is as follows. Glyceryl-ether monooxygenase that cleaves the O-alkyl bond of ether lipids. The chain is Alkylglycerol monooxygenase from Caenorhabditis elegans.